The following is a 289-amino-acid chain: MAFLSKVGRLFSQTSSHVTASSSMLQSIRCMSSSKIFVGGISYSTDEFGLREAFSKYGEVVDAKIIVDRETGRSRGFAFVTFTSTEEASNAMQLDGQDLHGRRIRVNYATERGSGFGGRGFGGPGGGYGASDGGYGAPAGGYGGGAGGYGGNSSYSGNAGGGGGYGGNSSYGGNAGGYGGNPPYSGNAVGGGGGYGSNFGGGGGYGVAGGVGGSENFAQGSSTNAGFDDKFESNQPLGNDTDHQTESGLGGDEQFGGSDNQFGDAENGNTENGPVGFDQTDDGDVAKRA.

A mitochondrion-targeting transit peptide spans 1 to 31; it reads MAFLSKVGRLFSQTSSHVTASSSMLQSIRCM. An RRM domain is found at 34–111; the sequence is SKIFVGGISY…RRIRVNYATE (78 aa). Residues 219 to 289 form a disordered region; sequence QGSSTNAGFD…TDDGDVAKRA (71 aa). The segment covering 257–272 has biased composition (polar residues); the sequence is GSDNQFGDAENGNTEN.

Belongs to the GR-RBP family. Homodimer. Interacts with MORF8/RIP1 AND RBG3/ORRM3. Binds to RBG2/ORRM5.

The protein resides in the mitochondrion. Possibly has a role in RNA transcription or processing during stress. Binds RNAs and DNAs sequence with a preference to single-stranded nucleic acids. Displays strong affinity to poly(U) sequence. Involved in C-to-U editing of mitochondrial RNA. Functions as a major mitochondrial editing factor. Controls 44 percent of the mitochondrial editing sites. This Arabidopsis thaliana (Mouse-ear cress) protein is Glycine-rich RNA-binding protein 5, mitochondrial.